Reading from the N-terminus, the 77-residue chain is Translation initiation factor IF-1, chloroplastic (77 aa).

In terms of domain architecture, S1-like spans 1 to 71; the sequence is MKEQKWIHEG…TRGRIIYRLR (71 aa).

Belongs to the IF-1 family. In terms of assembly, component of the 30S ribosomal translation pre-initiation complex which assembles on the 30S ribosome in the order IF-2 and IF-3, IF-1 and N-formylmethionyl-tRNA(fMet); mRNA recruitment can occur at any time during PIC assembly.

It is found in the plastid. It localises to the chloroplast. Functionally, one of the essential components for the initiation of protein synthesis. Stabilizes the binding of IF-2 and IF-3 on the 30S subunit to which N-formylmethionyl-tRNA(fMet) subsequently binds. Helps modulate mRNA selection, yielding the 30S pre-initiation complex (PIC). Upon addition of the 50S ribosomal subunit IF-1, IF-2 and IF-3 are released leaving the mature 70S translation initiation complex. The chain is Translation initiation factor IF-1, chloroplastic from Brexia madagascariensis.